The primary structure comprises 502 residues: MTEKKYIVALDQGTTSSRAVVMDHDANIISVSQREFEQIYPKPGWVEHDPMEIWATQSSTLVEVLAKADISSDQIAAIGITNQRETTIVWEKETGKPIYNAIVWQCRRTAEICEHLKRDGLEDYIRSNTGLVIDPYFSGTKVKWILDHVEGSRERARRGELLFGTVDTWLIWKMTQGRVHVTDYTNASRTMLFNIHTLDWDDKMLEVLDIPREMLPEVRRSSEVYGQTNIGGKGGTRIPISGIAGDQQAALFGQLCVKEGMAKNTYGTGCFMLMNTGEKAVKSENGLLTTIACGPTGEVNYALEGAVFMAGASIQWLRDEMKLINDAYDSEYFATKVQNTNGVYVVPAFTGLGAPYWDPYARGAIFGLTRGVNANHIIRATLESIAYQTRDVLEAMQADSGIRLHALRVDGGAVANNFLMQFQSDILGTRVERPEVREVTALGAAYLAGLAVGFWQNLDELQEKAVIEREFRPGIETTERNYRYAGWKKAVKRAMAWEEHDE.

Threonine 14 lines the ADP pocket. The ATP site is built by threonine 14, threonine 15, and serine 16. A sn-glycerol 3-phosphate-binding site is contributed by threonine 14. ADP is bound at residue arginine 18. 4 residues coordinate sn-glycerol 3-phosphate: arginine 84, glutamate 85, tyrosine 136, and aspartate 246. Glycerol contacts are provided by arginine 84, glutamate 85, tyrosine 136, aspartate 246, and glutamine 247. Residues threonine 268 and glycine 311 each contribute to the ADP site. Positions 268, 311, 315, and 412 each coordinate ATP. Positions 412 and 416 each coordinate ADP.

This sequence belongs to the FGGY kinase family. In terms of assembly, homotetramer and homodimer (in equilibrium). Heterodimer with EIIA-Glc. Binds 1 zinc ion per glycerol kinase EIIA-Glc dimer. The zinc ion is important for dimerization.

It catalyses the reaction glycerol + ATP = sn-glycerol 3-phosphate + ADP + H(+). It functions in the pathway polyol metabolism; glycerol degradation via glycerol kinase pathway; sn-glycerol 3-phosphate from glycerol: step 1/1. With respect to regulation, activity of this regulatory enzyme is affected by several metabolites. Allosterically and non-competitively inhibited by fructose 1,6-bisphosphate (FBP) and unphosphorylated phosphocarrier protein EIIA-Glc (III-Glc), an integral component of the bacterial phosphotransferase (PTS) system. Key enzyme in the regulation of glycerol uptake and metabolism. Catalyzes the phosphorylation of glycerol to yield sn-glycerol 3-phosphate. This Escherichia coli (strain ATCC 8739 / DSM 1576 / NBRC 3972 / NCIMB 8545 / WDCM 00012 / Crooks) protein is Glycerol kinase.